A 400-amino-acid polypeptide reads, in one-letter code: MNKKTIRDVDWAGKRALVRVDFNVPLDEQGQITDDTRIRAALPTIRYLLEHGAKVILMSHLGRPKGKPNPKYSLRPVVERLFELLPEATEVKKTEAITGPAAEAAVSMLKPGQVLVLENTRFDPREEANDPQMAAELAKLGDVFVNDAFGTAHRANASTEGVAHYLPAVAGFLMEKELTYIGGALSNPQRPFVTVIGGAKISDKIGVIENLLGKVDALLIGGGMANTFLLAKGLNLGDSLVEPESVPVAQQLMAKAEERGARLLLPVDVVIADAFSAEAQRQVVEVTAIPSGWRVLDIGPKTIELYSAEIRSARTVIWNGPMGVFELEPFAAGTRAIAQAMAEASANGAITIVGGGDSVAAVEQAGLAEKMAHVSTGGGASLELLEGRVLPGVAALQDAE.

Residues 21 to 23, Arg37, 60 to 63, Arg121, and Arg154 each bind substrate; these read DFN and HLGR. Residues Lys204, Glu326, and 355–358 each bind ATP; that span reads GGDS.

This sequence belongs to the phosphoglycerate kinase family. Monomer.

The protein resides in the cytoplasm. It catalyses the reaction (2R)-3-phosphoglycerate + ATP = (2R)-3-phospho-glyceroyl phosphate + ADP. It functions in the pathway carbohydrate degradation; glycolysis; pyruvate from D-glyceraldehyde 3-phosphate: step 2/5. This is Phosphoglycerate kinase from Chloroflexus aggregans (strain MD-66 / DSM 9485).